The primary structure comprises 424 residues: UDP-N-acetylglucosamine 1-carboxyvinyltransferase (424 aa).

Residue 22 to 23 (KN) coordinates phosphoenolpyruvate. Residue arginine 98 participates in UDP-N-acetyl-alpha-D-glucosamine binding. Cysteine 122 (proton donor) is an active-site residue. Cysteine 122 bears the 2-(S-cysteinyl)pyruvic acid O-phosphothioketal mark. Residues 127–131 (RPVDQ), aspartate 312, and isoleucine 334 each bind UDP-N-acetyl-alpha-D-glucosamine.

This sequence belongs to the EPSP synthase family. MurA subfamily.

The protein resides in the cytoplasm. It catalyses the reaction phosphoenolpyruvate + UDP-N-acetyl-alpha-D-glucosamine = UDP-N-acetyl-3-O-(1-carboxyvinyl)-alpha-D-glucosamine + phosphate. Its pathway is cell wall biogenesis; peptidoglycan biosynthesis. In terms of biological role, cell wall formation. Adds enolpyruvyl to UDP-N-acetylglucosamine. The polypeptide is UDP-N-acetylglucosamine 1-carboxyvinyltransferase (Xanthomonas euvesicatoria pv. vesicatoria (strain 85-10) (Xanthomonas campestris pv. vesicatoria)).